The chain runs to 216 residues: Protein-L-isoaspartate O-methyltransferase (216 aa).

The active site involves Ser-66.

This sequence belongs to the methyltransferase superfamily. L-isoaspartyl/D-aspartyl protein methyltransferase family.

The protein resides in the cytoplasm. The enzyme catalyses [protein]-L-isoaspartate + S-adenosyl-L-methionine = [protein]-L-isoaspartate alpha-methyl ester + S-adenosyl-L-homocysteine. In terms of biological role, catalyzes the methyl esterification of L-isoaspartyl residues in peptides and proteins that result from spontaneous decomposition of normal L-aspartyl and L-asparaginyl residues. It plays a role in the repair and/or degradation of damaged proteins. The sequence is that of Protein-L-isoaspartate O-methyltransferase from Colwellia psychrerythraea (strain 34H / ATCC BAA-681) (Vibrio psychroerythus).